The following is a 245-amino-acid chain: Tryptophan synthase alpha chain (245 aa).

Residues Glu37 and Asp48 each act as proton acceptor in the active site.

This sequence belongs to the TrpA family. Tetramer of two alpha and two beta chains.

The enzyme catalyses (1S,2R)-1-C-(indol-3-yl)glycerol 3-phosphate + L-serine = D-glyceraldehyde 3-phosphate + L-tryptophan + H2O. The protein operates within amino-acid biosynthesis; L-tryptophan biosynthesis; L-tryptophan from chorismate: step 5/5. Functionally, the alpha subunit is responsible for the aldol cleavage of indoleglycerol phosphate to indole and glyceraldehyde 3-phosphate. In Saccharolobus solfataricus (strain ATCC 35092 / DSM 1617 / JCM 11322 / P2) (Sulfolobus solfataricus), this protein is Tryptophan synthase alpha chain.